A 501-amino-acid polypeptide reads, in one-letter code: Isoflavone 3'-hydroxylase (501 aa).

A helical membrane pass occupies residues 7–24; the sequence is LLSLSFIITIKILLKITS. Position 439 (Cys-439) interacts with heme.

Belongs to the cytochrome P450 family. It depends on heme as a cofactor. As to expression, expressed constitutively in leaves and stems, but not in roots.

It is found in the endoplasmic reticulum membrane. The enzyme catalyses formononetin + reduced [NADPH--hemoprotein reductase] + O2 = calycosin + oxidized [NADPH--hemoprotein reductase] + H2O + H(+). Functionally, involved in the biosynthesis of the pterocarpin phytoalexins. Acts on isoflavones with a 4'-methoxy group on the B-ring, such as biochanin A, formononetin and 2'-hydroxyformononetin. Has a low activity with daidzein and pseudobaptigenin, and no activity with the 7-O-methylated isoflavonoids isoformononetin and prunetin. The polypeptide is Isoflavone 3'-hydroxylase (Medicago truncatula (Barrel medic)).